A 144-amino-acid polypeptide reads, in one-letter code: Large ribosomal subunit protein uL13 (144 aa).

The protein belongs to the universal ribosomal protein uL13 family. Part of the 50S ribosomal subunit.

In terms of biological role, this protein is one of the early assembly proteins of the 50S ribosomal subunit, although it is not seen to bind rRNA by itself. It is important during the early stages of 50S assembly. In Nitrosospira multiformis (strain ATCC 25196 / NCIMB 11849 / C 71), this protein is Large ribosomal subunit protein uL13.